Consider the following 401-residue polypeptide: Ufm1-specific protease 2 (401 aa).

Residues Cys-234, Asp-358, and His-360 contribute to the active site.

Belongs to the peptidase C78 family.

The protein resides in the endoplasmic reticulum. It localises to the cytoplasm. The protein localises to the nucleus. In terms of biological role, thiol-dependent isopeptidase that specifically cleaves UFM1, a ubiquitin-like modifier protein, from conjugated proteins. While it is also able to mediate the processing of UFM1 precursors, a prerequisite for conjugation reactions, ufsp2 mainly acts as a protein deUFMylase that mediates deconjugation of UFM1 from target proteins. This chain is Ufm1-specific protease 2, found in Danio rerio (Zebrafish).